Here is a 1647-residue protein sequence, read N- to C-terminus: Cortactin-binding protein 2 (1647 aa).

Disordered stretches follow at residues 1–27 (MATD…AEAA), 202–222 (EKKK…RSTE), 318–427 (HVKK…QPGL), 440–468 (GNAN…RDNL), and 482–604 (LSRF…PSID). The stretch at 120–276 (KMQERMATQL…EQLKRGSDSK (157 aa)) forms a coiled coil. Positions 362-372 (SSAPSLPPASA) are enriched in low complexity. Over residues 379–388 (GPSTGSTADL) the composition is skewed to polar residues. Residues 389–411 (PSSTAPAPGSAAQSPVAAALGPA) show a composition bias toward low complexity. Positions 440 to 466 (GNANDPDQNGNTTQSPPSRDVSPTSRD) are enriched in polar residues. Arginine 484 carries the asymmetric dimethylarginine modification. A compositionally biased stretch (low complexity) spans 488-509 (PAVGAAPRPGAPPTGDAGAYPP). Over residues 569 to 579 (TVASPPSSLPQ) the composition is skewed to polar residues. ANK repeat units follow at residues 695-725 (GRPT…DINY), 729-758 (DGHS…QVNA), 762-791 (NGFT…NINH), 795-824 (GGQT…DRSV), and 828-857 (DGWT…PAHG). Residues 856–886 (HGNSLNEEEPESDVSDLDDGEESSEGESKPV) are disordered. Residues 861-880 (NEEEPESDVSDLDDGEESSE) show a composition bias toward acidic residues. The stretch at 898-928 (EGWTAAHIAASKGFKNCLEILCRHRGLEPER) is one ANK 6 repeat. The disordered stretch occupies residues 1436–1467 (ENGAWRKVNTSPRRKSGRFSSPTWNKPDLSNE). Serine 1509 carries the post-translational modification Phosphoserine. The disordered stretch occupies residues 1542–1647 (RTFDSSGNNP…HKNEQTHRKT (106 aa)). Polar residues-rich tracts occupy residues 1544 to 1559 (FDSS…TVNN) and 1567 to 1584 (KEVS…SNNK). Residues 1609-1623 (SQNTKRSSSSSNTRQ) are compositionally biased toward low complexity. The span at 1630–1647 (SKEENWNLHKNEQTHRKT) shows a compositional bias: basic and acidic residues.

Interacts with CTTN/cortactin SH3 domain. Interacts with STRN, STRN4/zinedin and MOB4/phocein; this interactions mediate the association with the STRIPAK core complex and may regulate dendritic spine distribution of the STRIPAK complex in hippocampal neurons. Activation of glutamate receptors weakens the interaction with STRN and STRN4.

It is found in the cytoplasm. It localises to the cell cortex. Its subcellular location is the cell projection. The protein localises to the dendritic spine. Its function is as follows. Regulates the dendritic spine distribution of CTTN/cortactin in hippocampal neurons, and thus controls dendritic spinogenesis and dendritic spine maintenance. Associates with the striatin-interacting phosphatase and kinase (STRIPAK) core complex to regulate dendritic spine distribution of the STRIPAK complex in hippocampal neurons. The chain is Cortactin-binding protein 2 (CTTNBP2) from Microcebus murinus (Gray mouse lemur).